Here is a 162-residue protein sequence, read N- to C-terminus: Single-stranded DNA-binding protein 1 (162 aa).

An SSB domain is found at 5 to 110 (LNKVMLIGHL…IVCTDMQMLG (106 aa)). The interval 110 to 162 (GAKDSGGGTSDASYSQNRPSYSRPSRPEPSSGNYGASPSSGGAQEFEKDDLPF) is disordered. A compositionally biased stretch (low complexity) spans 122–140 (SYSQNRPSYSRPSRPEPSS). Over residues 141–151 (GNYGASPSSGG) the composition is skewed to polar residues.

As to quaternary structure, homotetramer.

This chain is Single-stranded DNA-binding protein 1 (ssb1), found in Chlorobaculum tepidum (strain ATCC 49652 / DSM 12025 / NBRC 103806 / TLS) (Chlorobium tepidum).